The following is a 567-amino-acid chain: Zinc finger protein 512 (567 aa).

The disordered stretch occupies residues M1–R32. Residues S12–T23 are compositionally biased toward polar residues. Residues K18 and K84 each participate in a glycyl lysine isopeptide (Lys-Gly) (interchain with G-Cter in SUMO2) cross-link. Residues A86–P148 are disordered. The segment covering K119–P130 has biased composition (basic residues). The segment at F197–H220 adopts a C2H2-type 1 zinc-finger fold. Residue K227 forms a Glycyl lysine isopeptide (Lys-Gly) (interchain with G-Cter in SUMO2) linkage. The C2H2-type 2 zinc-finger motif lies at L287–H310. A Glycyl lysine isopeptide (Lys-Gly) (interchain with G-Cter in SUMO2) cross-link involves residue K333. The C2H2-type 3; atypical zinc-finger motif lies at I406–C430. The C2H2-type 4 zinc-finger motif lies at Y440–H463. The tract at residues Q486 to K567 is disordered. Over residues R495–Q508 the composition is skewed to basic residues. The span at V523–E532 shows a compositional bias: basic and acidic residues. A compositionally biased stretch (basic residues) spans K556–K567.

Belongs to the krueppel C2H2-type zinc-finger protein family.

The protein resides in the nucleus. Functionally, may be involved in transcriptional regulation. In Pongo abelii (Sumatran orangutan), this protein is Zinc finger protein 512 (ZNF512).